Reading from the N-terminus, the 301-residue chain is Heat shock factor protein HSF24 (301 aa).

A DNA-binding region spans residues 7-101 (PAPFLLKTYQ…LLTAIRRRKT (95 aa)). Disordered stretches follow at residues 103–160 (TSTP…DENE) and 221–244 (GVKDLEEQGSYNDNDDKEDDDEKG). Over residues 107–142 (AGGKSVAAGASASPDNSGDDIGSSSTSSPDSKNPGS) the composition is skewed to low complexity. Over residues 233–243 (DNDDKEDDDEK) the composition is skewed to acidic residues.

The protein belongs to the HSF family. As to quaternary structure, homotrimer. In terms of processing, exhibits temperature-dependent phosphorylation.

It is found in the nucleus. In terms of biological role, DNA-binding protein that specifically binds heat shock promoter elements (HSE) and activates transcription. This Solanum peruvianum (Peruvian tomato) protein is Heat shock factor protein HSF24 (HSF24).